A 317-amino-acid polypeptide reads, in one-letter code: Acetyl-coenzyme A carboxylase carboxyl transferase subunit alpha (317 aa).

Residues 39–293 (RLETKAREAL…GDAIADALSQ (255 aa)) enclose the CoA carboxyltransferase C-terminal domain.

The protein belongs to the AccA family. Acetyl-CoA carboxylase is a heterohexamer composed of biotin carboxyl carrier protein (AccB), biotin carboxylase (AccC) and two subunits each of ACCase subunit alpha (AccA) and ACCase subunit beta (AccD).

The protein localises to the cytoplasm. The enzyme catalyses N(6)-carboxybiotinyl-L-lysyl-[protein] + acetyl-CoA = N(6)-biotinyl-L-lysyl-[protein] + malonyl-CoA. The protein operates within lipid metabolism; malonyl-CoA biosynthesis; malonyl-CoA from acetyl-CoA: step 1/1. Its function is as follows. Component of the acetyl coenzyme A carboxylase (ACC) complex. First, biotin carboxylase catalyzes the carboxylation of biotin on its carrier protein (BCCP) and then the CO(2) group is transferred by the carboxyltransferase to acetyl-CoA to form malonyl-CoA. The protein is Acetyl-coenzyme A carboxylase carboxyl transferase subunit alpha of Xanthobacter autotrophicus (strain ATCC BAA-1158 / Py2).